Here is a 242-residue protein sequence, read N- to C-terminus: Probable transcriptional regulatory protein Bcen2424_2294 (242 aa).

This sequence belongs to the TACO1 family.

The protein resides in the cytoplasm. This chain is Probable transcriptional regulatory protein Bcen2424_2294, found in Burkholderia cenocepacia (strain HI2424).